The following is a 416-amino-acid chain: POC1 centriolar protein homolog A (416 aa).

7 WD repeats span residues 16-55 (GHRD…RAYR), 58-97 (GHKD…ESVL), 100-139 (AHTG…IICT), 142-181 (EHNN…LIHT), 184-223 (EPGG…LLQH), 226-265 (VHSA…LLYT), and 268-307 (GHQG…VDYS). The tract at residues 311 to 340 (QQKRDHRTPSAQASGAAGDPESRSGQKTEV) is disordered. Positions 380–412 (QLDVLTQTVAILEQRLTLTEDKLKECLEQQHQA) form a coiled coil.

This sequence belongs to the WD repeat POC1 family.

In terms of biological role, may play an important role in centriole assembly and/or stability and ciliogenesis. In Danio rerio (Zebrafish), this protein is POC1 centriolar protein homolog A.